A 320-amino-acid polypeptide reads, in one-letter code: Lipoyl synthase (320 aa).

Residues cysteine 66, cysteine 71, cysteine 77, cysteine 92, cysteine 96, cysteine 99, and serine 306 each coordinate [4Fe-4S] cluster. A Radical SAM core domain is found at 77–295 (CFGHGTATFM…AEIGYAMGFS (219 aa)).

Belongs to the radical SAM superfamily. Lipoyl synthase family. [4Fe-4S] cluster is required as a cofactor.

The protein resides in the cytoplasm. It catalyses the reaction [[Fe-S] cluster scaffold protein carrying a second [4Fe-4S](2+) cluster] + N(6)-octanoyl-L-lysyl-[protein] + 2 oxidized [2Fe-2S]-[ferredoxin] + 2 S-adenosyl-L-methionine + 4 H(+) = [[Fe-S] cluster scaffold protein] + N(6)-[(R)-dihydrolipoyl]-L-lysyl-[protein] + 4 Fe(3+) + 2 hydrogen sulfide + 2 5'-deoxyadenosine + 2 L-methionine + 2 reduced [2Fe-2S]-[ferredoxin]. The protein operates within protein modification; protein lipoylation via endogenous pathway; protein N(6)-(lipoyl)lysine from octanoyl-[acyl-carrier-protein]: step 2/2. In terms of biological role, catalyzes the radical-mediated insertion of two sulfur atoms into the C-6 and C-8 positions of the octanoyl moiety bound to the lipoyl domains of lipoate-dependent enzymes, thereby converting the octanoylated domains into lipoylated derivatives. The protein is Lipoyl synthase of Thioalkalivibrio sulfidiphilus (strain HL-EbGR7).